The sequence spans 342 residues: Ribosomal RNA small subunit methyltransferase C (342 aa).

It belongs to the methyltransferase superfamily. RsmC family. In terms of assembly, monomer.

Its subcellular location is the cytoplasm. The enzyme catalyses guanosine(1207) in 16S rRNA + S-adenosyl-L-methionine = N(2)-methylguanosine(1207) in 16S rRNA + S-adenosyl-L-homocysteine + H(+). In terms of biological role, specifically methylates the guanine in position 1207 of 16S rRNA in the 30S particle. In Salmonella agona (strain SL483), this protein is Ribosomal RNA small subunit methyltransferase C.